The sequence spans 184 residues: 3-hydroxydecanoyl-[acyl-carrier-protein] dehydratase (184 aa).

The active site involves His-77.

The protein belongs to the thioester dehydratase family. FabA subfamily. As to quaternary structure, homodimer.

It is found in the cytoplasm. The catalysed reaction is a (3R)-hydroxyacyl-[ACP] = a (2E)-enoyl-[ACP] + H2O. It catalyses the reaction (3R)-hydroxydecanoyl-[ACP] = (2E)-decenoyl-[ACP] + H2O. The enzyme catalyses (2E)-decenoyl-[ACP] = (3Z)-decenoyl-[ACP]. Its pathway is lipid metabolism; fatty acid biosynthesis. In terms of biological role, necessary for the introduction of cis unsaturation into fatty acids. Catalyzes the dehydration of (3R)-3-hydroxydecanoyl-ACP to E-(2)-decenoyl-ACP and then its isomerization to Z-(3)-decenoyl-ACP. Can catalyze the dehydratase reaction for beta-hydroxyacyl-ACPs with saturated chain lengths up to 16:0, being most active on intermediate chain length. This chain is 3-hydroxydecanoyl-[acyl-carrier-protein] dehydratase, found in Hyphomonas neptunium (strain ATCC 15444).